A 360-amino-acid chain; its full sequence is Decorin (360 aa).

Residues 1–16 (MTATLILLLLAQVSWA) form the signal peptide. The propeptide occupies 17 to 30 (GPFQQRGLFDFMLE). O-linked (Xyl...) (glycosaminoglycan) serine glycosylation is present at Ser-34. 2 disulfides stabilise this stretch: Cys-55-Cys-61 and Cys-59-Cys-68. LRR repeat units lie at residues 74 to 94 (DKVPKDLPPDTTLLDLQNNKI), 95 to 118 (TEIKDGDFKNLKNLHALILVNNKI), 119 to 142 (SKISPGAFTPLVKLERLYLSKNHL), 143 to 163 (KELPEKMPKSLQELRAHENEI), 164 to 187 (TKVRKSVFSGMNQMIVIELGTNPL), 188 to 213 (KSSGIENGAFQGMKKLSYIRIADTNI), 214 to 234 (TTIPQGLPPSLTELHLDGNKI), 235 to 258 (TKIDASSLKGLNNLAKLGLSFNDI), 259 to 282 (SAVDNGSLANAPHLRELHLDNNKL), 283 to 305 (IRVPGGLADHKYIQVVYLHNNNI), 306 to 335 (SVVGANDFCPPGYNTKKASYSGVSLFSNPV), and 336 to 360 (QYWEIQPSTFRCVYMRSAIQLGNYK). Residue Asn-212 is glycosylated (N-linked (GlcNAc...) asparagine). 2 N-linked (GlcNAc...) asparagine glycosylation sites follow: Asn-263 and Asn-304. Cys-314 and Cys-347 are oxidised to a cystine.

Belongs to the small leucine-rich proteoglycan (SLRP) family. SLRP class I subfamily. As to quaternary structure, binds to type I and type II collagen, fibronectin and TGF-beta. Forms a ternary complex with MFAP2 and ELN. Interacts with DPT. Post-translationally, the attached glycosaminoglycan chain can be either chondroitin sulfate or dermatan sulfate depending upon the tissue of origin.

Its subcellular location is the secreted. It localises to the extracellular space. The protein resides in the extracellular matrix. In terms of biological role, may affect the rate of fibrils formation. This is Decorin (DCN) from Oryctolagus cuniculus (Rabbit).